A 447-amino-acid polypeptide reads, in one-letter code: Argininosuccinate synthase (447 aa).

Residues 20 to 28 (AFSGGLDTS) and alanine 46 each bind ATP. Tyrosine 102 is a binding site for L-citrulline. ATP is bound by residues glycine 132 and threonine 134. Residues threonine 134, asparagine 138, and aspartate 139 each coordinate L-aspartate. Position 138 (asparagine 138) interacts with L-citrulline. Aspartate 139 contributes to the ATP binding site. The L-citrulline site is built by arginine 142 and serine 195. Residue aspartate 197 participates in ATP binding. 3 residues coordinate L-citrulline: threonine 204, glutamate 206, and glutamate 283.

It belongs to the argininosuccinate synthase family. Type 2 subfamily. Homotetramer.

The protein resides in the cytoplasm. It catalyses the reaction L-citrulline + L-aspartate + ATP = 2-(N(omega)-L-arginino)succinate + AMP + diphosphate + H(+). Its pathway is amino-acid biosynthesis; L-arginine biosynthesis; L-arginine from L-ornithine and carbamoyl phosphate: step 2/3. This Neisseria gonorrhoeae (strain ATCC 700825 / FA 1090) protein is Argininosuccinate synthase.